Here is an 843-residue protein sequence, read N- to C-terminus: Histone-lysine N-methyltransferase PRDM9 (843 aa).

One can recognise a KRAB-related domain in the interval 23-86 (KVKDEFKDIS…QRQAMKPQIN (64 aa)). Disordered stretches follow at residues 85 to 104 (INDSEDSDEEWTPKQQVSPP) and 110 to 170 (VKHS…KKLK). Zn(2+)-binding residues include cysteine 205, cysteine 208, cysteine 216, and histidine 219. The SET domain occupies 244–358 (PGLRISPSGI…PGCELLVWYG (115 aa)). S-adenosyl-L-methionine-binding positions include 256–258 (AGL), tyrosine 291, and 320–321 (NC). Position 288 to 294 (288 to 294 (NSGYSWL)) interacts with substrate. Tyrosine 357 serves as a coordination point for substrate. Lysine 368 carries the post-translational modification N6,N6,N6-trimethyllysine; alternate. At lysine 368 the chain carries N6-methyllysine; alternate. 2 positions are modified to N6-methyllysine: lysine 372 and lysine 374. Residues 388–411 (HPCLLCSLAFSSQKFLTQHMEWNH) form a C2H2-type 1 zinc finger. Zn(2+)-binding residues include cysteine 390, cysteine 393, histidine 406, and histidine 411. Residues 418 to 493 (GTSARINPKP…VEELRTGQTT (76 aa)) are disordered. Basic and acidic residues predominate over residues 436-454 (QEQHVDSQNKNDKASNEVK). Over residues 462–472 (RISTTFPSTLK) the composition is skewed to polar residues. Residues 473-488 (EQMRSEESKRTVEELR) show a composition bias toward basic and acidic residues. The segment at 513 to 531 (QCGQYFSDKSNVNEHQKTH) adopts a C2H2-type 2; degenerate zinc-finger fold. 11 C2H2-type zinc fingers span residues 537-559 (YVCRECGRGFTQNSHLIQHQRTH), 565-587 (YVCRECGRGFTQKSDLIKHQRTH), 593-615 (YVCRECGRGFTQKSDLIKHQRTH), 621-643 (YVCRECGRGFTQKSVLIKHQRTH), 649-671 (YVCRECGRGFTQKSVLIKHQRTH), 677-699 (YVCRECGRGFTAKSVLIQHQRTH), 705-727 (YVCRECGRGFTAKSNLIQHQRTH), 733-755 (YVCRECGRGFTAKSVLIQHQRTH), 761-783 (YVCRECGRGFTAKSVLIQHQRTH), 789-811 (YVCRECGRGFTQKSNLIKHQRTH), and 817-839 (YVCRECGWGFTQKSDLIQHQRTH). Zn(2+) is bound by residues cysteine 707, cysteine 710, histidine 723, histidine 727, cysteine 735, cysteine 738, histidine 751, histidine 755, cysteine 763, cysteine 766, histidine 779, histidine 783, cysteine 791, cysteine 794, histidine 807, and histidine 811. The interval 715–805 (TAKSNLIQHQ…RGFTQKSNLI (91 aa)) is DNA-binding.

The protein belongs to the class V-like SAM-binding methyltransferase superfamily. In terms of assembly, homodimer. Interacts with EHMT2 and CDYL; interaction only takes place when PRDM9 is bound to hotspot DNA. Interacts with CXXC1; this interaction does not link PRDM9-activated recombination hotspot sites with DSB machinery and is not required for the hotspot recognition pathway. Forms a complex with EWSR1, REC8, SYCP3 and SYCP1; complex formation is dependent of phosphorylated form of REC8 and requires PRDM9 bound to hotspot DNA; EWSR1 joins PRDM9 with the chromosomal axis through REC8. In terms of processing, mono-methylated; automethylated. Tri-methylated; automethylated. Mono-methylation is predominant; automethylation is lower and slower than H3 peptide methylation and is in a highest S-adenosyl-L-methionine concentration-dependent. There are two major sites for automethylation at Lys-368 and Lys-374. Lysines can be simultaneously methylated, such as Lys-368(me3)/Lys-372(me1), Lys-368(me1)/Lys-374(me1) and Lys-368(me1)/Lys-372(me1)/Lys-374(me1). Automethylation is an intramolecular (cis) process. Specifically expressed in germ cells entering meiotic prophase in female fetal gonads and in postnatal testis. Expressed in early meiotic prophase.

The protein localises to the nucleus. The protein resides in the chromosome. The catalysed reaction is L-lysyl-[protein] + S-adenosyl-L-methionine = N(6)-methyl-L-lysyl-[protein] + S-adenosyl-L-homocysteine + H(+). The enzyme catalyses N(6),N(6)-dimethyl-L-lysyl-[protein] + S-adenosyl-L-methionine = N(6),N(6),N(6)-trimethyl-L-lysyl-[protein] + S-adenosyl-L-homocysteine + H(+). It catalyses the reaction L-lysyl(4)-[histone H3] + 3 S-adenosyl-L-methionine = N(6),N(6),N(6)-trimethyl-L-lysyl(4)-[histone H3] + 3 S-adenosyl-L-homocysteine + 3 H(+). It carries out the reaction L-lysyl(36)-[histone H3] + 3 S-adenosyl-L-methionine = N(6),N(6),N(6)-trimethyl-L-lysyl(36)-[histone H3] + 3 S-adenosyl-L-homocysteine + 3 H(+). The catalysed reaction is L-lysyl(9)-[histone H3] + 3 S-adenosyl-L-methionine = N(6),N(6),N(6)-trimethyl-L-lysyl(9)-[histone H3] + 3 S-adenosyl-L-homocysteine + 3 H(+). The enzyme catalyses L-lysyl(20)-[histone H4] + S-adenosyl-L-methionine = N(6)-methyl-L-lysyl(20)-[histone H4] + S-adenosyl-L-homocysteine + H(+). It catalyses the reaction N(6)-methyl-L-lysyl(20)-[histone H4] + S-adenosyl-L-methionine = N(6),N(6)-dimethyl-L-lysyl(20)-[histone H4] + S-adenosyl-L-homocysteine + H(+). In terms of biological role, histone methyltransferase that sequentially mono-, di-, and tri-methylates both 'Lys-4' (H3K4) and 'Lys-36' (H3K36) of histone H3 to produce respectively trimethylated 'Lys-4' (H3K4me3) and trimethylated 'Lys-36' (H3K36me3) histone H3 and plays a key role in meiotic prophase by determining hotspot localization thereby promoting meiotic recombination. Can also methylate all four core histones with H3 being the best substrate and the most highly modified. Is also able, on one hand, to mono and di-methylate H4K20 and on other hand to trimethylate H3K9 with the di-methylated H3K9 as the best substrate. During meiotic prophase, binds specific DNA sequences through its zinc finger domains thereby determining hotspot localization where it promotes local H3K4me3 and H3K36me3 enrichment on the same nucleosomes through its histone methyltransferase activity. Thereby promotes double-stranded breaks (DSB) formation, at this subset of PRDM9-binding sites, that initiates meiotic recombination for the proper meiotic progression. During meiotic progression hotspot-bound PRDM9 interacts with several complexes; in early leptonema binds CDYL and EHMT2 followed by EWSR1 and CXXC1 by the end of leptonema. EWSR1 joins PRDM9 with the chromosomal axis through REC8. In this way, controls the DSB repair pathway, pairing of homologous chromosomes and sex body formation. Moreover plays a central role in the transcriptional activation of genes during early meiotic prophase thanks to H3K4me3 and H3K36me3 enrichment that represents a specific tag for epigenetic transcriptional activation. In addition performs automethylation. Acetylation and phosphorylation of histone H3 attenuate or prevent histone H3 methylation. This is Histone-lysine N-methyltransferase PRDM9 from Mus musculus (Mouse).